The chain runs to 306 residues: MKTVPAMLGTPRLFREFFILHLGLWSILCEKATKRNDEECPVQLTITRNSKQSARTGELFKIQCPVKYCVHRPNVTWCKHNGTICVPLEVSPQLYTSWEENQSVPVFVLHFKPIHLSDNGSYSCSTNFNSQVINSHSVTIHVRERTQNSSEHPLITVSDIPDATNASGPSTMEERPGRTWLLYTLLPLGALLLLLACVCLLCFLKRIQGKEKKPSDLAGRDTNLVDIPASSRTNHQALPSGTGIYDNDPWSSMQDESELTISLQSERNNQGIVYASLNHCVIGRNPRQENNMQEAPTEYASICVRS.

Residues 1–29 (MKTVPAMLGTPRLFREFFILHLGLWSILC) form the signal peptide. Residues 30–183 (EKATKRNDEE…ERPGRTWLLY (154 aa)) are Extracellular-facing. The Ig-like V-type domain occupies 37 to 139 (DEECPVQLTI…SQVINSHSVT (103 aa)). 3 disulfide bridges follow: C40–C69, C64–C124, and C78–C85. N74, N81, N101, N119, N148, and N165 each carry an N-linked (GlcNAc...) asparagine glycan. Residues 184 to 204 (TLLPLGALLLLLACVCLLCFL) traverse the membrane as a helical segment. Residues 205–306 (KRIQGKEKKP…TEYASICVRS (102 aa)) are Cytoplasmic-facing.

In terms of assembly, interacts with tyrosine phosphatases PTPN6/SHP-1 and PTPN11/SHP-2. Interacts with TNFRSF14/HVEM (via cysteine-rich domain 1). Phosphorylated on Tyr residues by TNFRSF14 and by antigen receptors cross-linking, both inducing association with PTPN6 and PTPN11. Post-translationally, N-glycosylated. Expressed in splenic T- and B-cells as well as lymph node tissues but very weakly in somatic tissues. Also expressed in macrophages, NK cells and dendritic cells. A polymorphic tissue distribution between several strains is seen.

It is found in the cell membrane. Its function is as follows. Inhibitory receptor on lymphocytes that negatively regulates antigen receptor signaling via PTPN6/SHP-1 and PTPN11/SHP-2. May interact in cis (on the same cell) or in trans (on other cells) with TNFRSF14. In cis interactions, appears to play an immune regulatory role inhibiting in trans interactions in naive T cells to maintain a resting state. In trans interactions, can predominate during adaptive immune response to provide survival signals to effector T cells. This is B- and T-lymphocyte attenuator from Mus musculus (Mouse).